The following is a 126-amino-acid chain: Aspartate 1-decarboxylase (126 aa).

Residue S25 is the Schiff-base intermediate with substrate; via pyruvic acid of the active site. Pyruvic acid (Ser) is present on S25. T57 lines the substrate pocket. Y58 (proton donor) is an active-site residue. Position 73–75 (73–75) interacts with substrate; the sequence is GGA.

It belongs to the PanD family. In terms of assembly, heterooctamer of four alpha and four beta subunits. The cofactor is pyruvate. In terms of processing, is synthesized initially as an inactive proenzyme, which is activated by self-cleavage at a specific serine bond to produce a beta-subunit with a hydroxyl group at its C-terminus and an alpha-subunit with a pyruvoyl group at its N-terminus.

It is found in the cytoplasm. The catalysed reaction is L-aspartate + H(+) = beta-alanine + CO2. The protein operates within cofactor biosynthesis; (R)-pantothenate biosynthesis; beta-alanine from L-aspartate: step 1/1. In terms of biological role, catalyzes the pyruvoyl-dependent decarboxylation of aspartate to produce beta-alanine. The protein is Aspartate 1-decarboxylase of Xanthomonas axonopodis pv. citri (strain 306).